The chain runs to 357 residues: Peptide chain release factor 1 (357 aa).

Gln234 carries the N5-methylglutamine modification. Basic and acidic residues predominate over residues 284–307 (KKQEQRSNDRKQQVGSGDRSERIR). Residues 284-313 (KKQEQRSNDRKQQVGSGDRSERIRTYNFPQ) are disordered.

Belongs to the prokaryotic/mitochondrial release factor family. Post-translationally, methylated by PrmC. Methylation increases the termination efficiency of RF1.

The protein localises to the cytoplasm. Its function is as follows. Peptide chain release factor 1 directs the termination of translation in response to the peptide chain termination codons UAG and UAA. This Borrelia turicatae (strain 91E135) protein is Peptide chain release factor 1.